A 146-amino-acid polypeptide reads, in one-letter code: Cytochrome c-type biogenesis protein CcmE (146 aa).

Over 1–8 the chain is Cytoplasmic; it reads MHPKRKKR. Residues 9–29 traverse the membrane as a helical; Signal-anchor for type II membrane protein segment; the sequence is LLIVLAGLAVVAVASGLILNA. The Periplasmic segment spans residues 30 to 146; the sequence is FRSNLVFFHT…IQRAGETVVQ (117 aa). The heme site is built by His124 and Tyr128.

It belongs to the CcmE/CycJ family.

The protein resides in the cell inner membrane. Functionally, heme chaperone required for the biogenesis of c-type cytochromes. Transiently binds heme delivered by CcmC and transfers the heme to apo-cytochromes in a process facilitated by CcmF and CcmH. The protein is Cytochrome c-type biogenesis protein CcmE of Laribacter hongkongensis (strain HLHK9).